The primary structure comprises 320 residues: Cell-cell adhesion glycoprotein 64 (320 aa).

Residues 1-19 (MNKFITLFVLLASVSVAMS) form the signal peptide. 9 disulfide bridges follow: cysteine 39–cysteine 57, cysteine 67–cysteine 79, cysteine 73–cysteine 86, cysteine 98–cysteine 110, cysteine 104–cysteine 115, cysteine 123–cysteine 138, cysteine 132–cysteine 147, cysteine 157–cysteine 171, and cysteine 165–cysteine 176. Asparagine 49 is a glycosylation site (N-linked (GlcNAc...) asparagine). N-linked (GlcNAc...) asparagine glycosylation is present at asparagine 80. Asparagine 141 and asparagine 158 each carry an N-linked (GlcNAc...) asparagine glycan. N-linked (GlcNAc...) asparagine glycosylation is present at asparagine 187. Disulfide bonds link cysteine 188–cysteine 202 and cysteine 194–cysteine 207. N-linked (GlcNAc...) asparagine glycosylation is present at asparagine 216. Intrachain disulfides connect cysteine 226–cysteine 246, cysteine 232–cysteine 234, cysteine 266–cysteine 285, and cysteine 270–cysteine 281. Serine 298 carries the GPI-like-anchor amidated serine lipid modification. The propeptide at 299–320 (SATTIAFNAFVVFAIVLSVLLF) is removed in mature form.

Post-translationally, contains 18 disulfide bonds. The GPI-like-anchor contains a phosphoceramide group, rather than a phosphatidyl group.

It is found in the cell membrane. Its function is as follows. Cell-cell adhesion during development. In Heterostelium pallidum (Cellular slime mold), this protein is Cell-cell adhesion glycoprotein 64.